The sequence spans 245 residues: 14-3-3 protein zeta (245 aa).

The protein belongs to the 14-3-3 family. As to quaternary structure, homodimer.

The protein localises to the cytoplasm. Adapter protein implicated in the regulation of a large spectrum of both general and specialized signaling pathways. Binds to a large number of partners, usually by recognition of a phosphoserine or phosphothreonine motif. Binding generally results in the modulation of the activity of the binding partner. This Xenopus tropicalis (Western clawed frog) protein is 14-3-3 protein zeta (ywhaz).